Consider the following 113-residue polypeptide: Flagellar hook-basal body complex protein FliE (113 aa).

It belongs to the FliE family.

It localises to the bacterial flagellum basal body. This Rhizobium etli (strain ATCC 51251 / DSM 11541 / JCM 21823 / NBRC 15573 / CFN 42) protein is Flagellar hook-basal body complex protein FliE.